Reading from the N-terminus, the 357-residue chain is sn-glycerol-3-phosphate import ATP-binding protein UgpC (357 aa).

An ABC transporter domain is found at 4–235; sequence LKLQAVTKSY…PASLFVASFI (232 aa). 37–44 is a binding site for ATP; it reads GPSGCGKS.

This sequence belongs to the ABC transporter superfamily. sn-glycerol-3-phosphate importer (TC 3.A.1.1.3) family. The complex is composed of two ATP-binding proteins (UgpC), two transmembrane proteins (UgpA and UgpE) and a solute-binding protein (UgpB).

The protein localises to the cell inner membrane. It carries out the reaction sn-glycerol 3-phosphate(out) + ATP + H2O = sn-glycerol 3-phosphate(in) + ADP + phosphate + H(+). Functionally, part of the ABC transporter complex UgpBAEC involved in sn-glycerol-3-phosphate (G3P) import. Responsible for energy coupling to the transport system. In Yersinia pestis bv. Antiqua (strain Antiqua), this protein is sn-glycerol-3-phosphate import ATP-binding protein UgpC.